The sequence spans 162 residues: Peroxiredoxin-2C (162 aa).

In terms of domain architecture, Thioredoxin spans 4-162 (ITVGDVVPDG…SSAEDILKAL (159 aa)). C51 (cysteine sulfenic acid (-SOH) intermediate) is an active-site residue.

The protein belongs to the peroxiredoxin family. Prx5 subfamily. In terms of assembly, monomer. As to expression, highly expressed in buds and flowers. Slightly expressed in green tissues. Also detected in pollen.

Its subcellular location is the cytoplasm. It catalyses the reaction [glutaredoxin]-dithiol + a hydroperoxide = [glutaredoxin]-disulfide + an alcohol + H2O. Functionally, thiol-specific peroxidase that catalyzes the reduction of hydrogen peroxide and organic hydroperoxides to water and alcohols, respectively. Plays a role in cell protection against oxidative stress by detoxifying peroxides and as sensor of hydrogen peroxide-mediated signaling events. This Arabidopsis thaliana (Mouse-ear cress) protein is Peroxiredoxin-2C (PRXIIC).